We begin with the raw amino-acid sequence, 446 residues long: Glutamate-1-semialdehyde 2,1-aminomutase (446 aa).

Lys-278 carries the N6-(pyridoxal phosphate)lysine modification.

Belongs to the class-III pyridoxal-phosphate-dependent aminotransferase family. HemL subfamily. In terms of assembly, homodimer. Pyridoxal 5'-phosphate is required as a cofactor.

Its subcellular location is the cytoplasm. The catalysed reaction is (S)-4-amino-5-oxopentanoate = 5-aminolevulinate. Its pathway is porphyrin-containing compound metabolism; protoporphyrin-IX biosynthesis; 5-aminolevulinate from L-glutamyl-tRNA(Glu): step 2/2. The chain is Glutamate-1-semialdehyde 2,1-aminomutase from Deinococcus geothermalis (strain DSM 11300 / CIP 105573 / AG-3a).